Reading from the N-terminus, the 215-residue chain is Probable nicotinate-nucleotide adenylyltransferase (215 aa).

It belongs to the NadD family.

It carries out the reaction nicotinate beta-D-ribonucleotide + ATP + H(+) = deamido-NAD(+) + diphosphate. It participates in cofactor biosynthesis; NAD(+) biosynthesis; deamido-NAD(+) from nicotinate D-ribonucleotide: step 1/1. Its function is as follows. Catalyzes the reversible adenylation of nicotinate mononucleotide (NaMN) to nicotinic acid adenine dinucleotide (NaAD). This chain is Probable nicotinate-nucleotide adenylyltransferase, found in Coxiella burnetii (strain Dugway 5J108-111).